The chain runs to 157 residues: dCTP deaminase (157 aa).

Residues 79 to 84, Asp-95, Gln-124, and Tyr-138 each bind dCTP; that span reads RSSLAR.

Belongs to the dCTP deaminase family. As to quaternary structure, homotrimer.

The catalysed reaction is dCTP + H2O + H(+) = dUTP + NH4(+). The protein operates within pyrimidine metabolism; dUMP biosynthesis; dUMP from dCTP (dUTP route): step 1/2. Its function is as follows. Catalyzes the deamination of dCTP to dUTP. This is dCTP deaminase from Thermococcus gammatolerans (strain DSM 15229 / JCM 11827 / EJ3).